A 312-amino-acid polypeptide reads, in one-letter code: Small ribosomal subunit protein uS2 (312 aa).

Residues 232–312 (RASGAAERDE…AAPEGEAAAE (81 aa)) are disordered. Basic and acidic residues predominate over residues 245-284 (REGRDDRGDRRDDRRGPRRGDRRDDRRDRGGDRGGDRRGP). The span at 291–312 (AAPVASAEPAAEAAPEGEAAAE) shows a compositional bias: low complexity.

It belongs to the universal ribosomal protein uS2 family.

This chain is Small ribosomal subunit protein uS2, found in Myxococcus xanthus (strain DK1622).